The primary structure comprises 188 residues: Peptidyl-tRNA hydrolase (188 aa).

Phe-15 contributes to the tRNA binding site. His-20 serves as the catalytic Proton acceptor. TRNA is bound by residues Tyr-64, Asn-66, and Asn-112.

This sequence belongs to the PTH family. As to quaternary structure, monomer.

The protein localises to the cytoplasm. It carries out the reaction an N-acyl-L-alpha-aminoacyl-tRNA + H2O = an N-acyl-L-amino acid + a tRNA + H(+). Its function is as follows. Hydrolyzes ribosome-free peptidyl-tRNAs (with 1 or more amino acids incorporated), which drop off the ribosome during protein synthesis, or as a result of ribosome stalling. Functionally, catalyzes the release of premature peptidyl moieties from peptidyl-tRNA molecules trapped in stalled 50S ribosomal subunits, and thus maintains levels of free tRNAs and 50S ribosomes. This is Peptidyl-tRNA hydrolase from Borreliella afzelii (strain PKo) (Borrelia afzelii).